The sequence spans 622 residues: Elongation factor 4 (622 aa).

The 182-residue stretch at 17–198 (ELLRNFCIIA…QIVRQIPAPV (182 aa)) folds into the tr-type G domain. GTP is bound by residues 29–34 (DHGKST) and 145–148 (NKID).

Belongs to the TRAFAC class translation factor GTPase superfamily. Classic translation factor GTPase family. LepA subfamily.

The protein resides in the cell membrane. It carries out the reaction GTP + H2O = GDP + phosphate + H(+). Required for accurate and efficient protein synthesis under certain stress conditions. May act as a fidelity factor of the translation reaction, by catalyzing a one-codon backward translocation of tRNAs on improperly translocated ribosomes. Back-translocation proceeds from a post-translocation (POST) complex to a pre-translocation (PRE) complex, thus giving elongation factor G a second chance to translocate the tRNAs correctly. Binds to ribosomes in a GTP-dependent manner. This Kineococcus radiotolerans (strain ATCC BAA-149 / DSM 14245 / SRS30216) protein is Elongation factor 4.